The following is a 493-amino-acid chain: 3-octaprenyl-4-hydroxybenzoate carboxy-lyase (493 aa).

Mn(2+) is bound at residue Asn-172. Prenylated FMN-binding positions include 175–177 (IYR), 189–191 (RWL), and 194–195 (RG). Glu-238 is a Mn(2+) binding site. The active-site Proton donor is Asp-287.

Belongs to the UbiD family. Homohexamer. Prenylated FMN is required as a cofactor. Requires Mn(2+) as cofactor.

The protein localises to the cell membrane. It catalyses the reaction a 4-hydroxy-3-(all-trans-polyprenyl)benzoate + H(+) = a 2-(all-trans-polyprenyl)phenol + CO2. It functions in the pathway cofactor biosynthesis; ubiquinone biosynthesis. Functionally, catalyzes the decarboxylation of 3-octaprenyl-4-hydroxy benzoate to 2-octaprenylphenol, an intermediate step in ubiquinone biosynthesis. This is 3-octaprenyl-4-hydroxybenzoate carboxy-lyase from Shewanella baltica (strain OS195).